The chain runs to 270 residues: MDSTPTSTDTLVIGGRQFRSRLFTGTGKYPNLALMQQSLDRSDCEMVTVAVRRVQTVAAGHAGLMEAIDWTKIWMLPNTAGCTTAEEAIRVARLGRELARLAGQEHNTFVKLEVIPDSRHLLPDPFGTLEAAEQLVKEGFTVLPYINADPLLAKRLEEVGCATVMPLGSPIGSGQGLRNASNIALIIENASVPVVVDAGIGVPSEASAALEMGADAVLVNSAIALAGNPPLMAEAMASAVRAGRQAFQAGRLPTRAQASPSSPTTGKVND.

The active-site Schiff-base intermediate with DXP is the K111. 1-deoxy-D-xylulose 5-phosphate is bound by residues G172, 198 to 199, and 220 to 221; these read AG and NS. The disordered stretch occupies residues 249-270; that stretch reads AGRLPTRAQASPSSPTTGKVND. Positions 256-270 are enriched in polar residues; the sequence is AQASPSSPTTGKVND.

This sequence belongs to the ThiG family. Homotetramer. Forms heterodimers with either ThiH or ThiS.

The protein localises to the cytoplasm. It carries out the reaction [ThiS sulfur-carrier protein]-C-terminal-Gly-aminoethanethioate + 2-iminoacetate + 1-deoxy-D-xylulose 5-phosphate = [ThiS sulfur-carrier protein]-C-terminal Gly-Gly + 2-[(2R,5Z)-2-carboxy-4-methylthiazol-5(2H)-ylidene]ethyl phosphate + 2 H2O + H(+). The protein operates within cofactor biosynthesis; thiamine diphosphate biosynthesis. Functionally, catalyzes the rearrangement of 1-deoxy-D-xylulose 5-phosphate (DXP) to produce the thiazole phosphate moiety of thiamine. Sulfur is provided by the thiocarboxylate moiety of the carrier protein ThiS. In vitro, sulfur can be provided by H(2)S. The sequence is that of Thiazole synthase from Synechococcus sp. (strain WH7803).